We begin with the raw amino-acid sequence, 225 residues long: Prepilin leader peptidase/N-methyltransferase (225 aa).

Residues 1 to 2 (MT) lie on the Periplasmic side of the membrane. The helical transmembrane segment at 3–23 (MLLPLFILVGFIADYFVNAIA) threads the bilayer. Residues 24–67 (YHLSPLEDKTALTFRQVLVHFRQKKYAWHDTVPLILCVAAAIAC) lie on the Cytoplasmic side of the membrane. A helical transmembrane segment spans residues 68–88 (ALAPFTPIVTGALFLYFCFVL). Over 89–103 (TLSVIDFRTQLLPDK) the chain is Periplasmic. A helical transmembrane segment spans residues 104 to 124 (LTLPLLWLGLVFNAQYGLIDL). Topologically, residues 125-127 (HDA) are cytoplasmic. Residues 128 to 148 (VYGAVAGYGVLWCVYWGVWLV) traverse the membrane as a helical segment. Over 149–174 (CHKEGLGYGDFKLLAAAGAWCGWQTL) the chain is Periplasmic. The helical transmembrane segment at 175 to 195 (PMILLIASLGGIGYAIVSQLL) threads the bilayer. The Cytoplasmic portion of the chain corresponds to 196 to 202 (QRRTITT). The chain crosses the membrane as a helical span at residues 203–223 (IAFGPWLALGSMINLGYLAWI). The Periplasmic segment spans residues 224-225 (SY).

The protein belongs to the peptidase A24 family.

Its subcellular location is the cell inner membrane. The enzyme catalyses Typically cleaves a -Gly-|-Phe- bond to release an N-terminal, basic peptide of 5-8 residues from type IV prepilin, and then N-methylates the new N-terminal amino group, the methyl donor being S-adenosyl-L-methionine.. In terms of biological role, plays a role in type II pseudopili formation by proteolytically removing the leader sequence from substrate proteins and subsequently monomethylating the alpha-amino group of the newly exposed N-terminal phenylalanine. Substrates include proteins required for biogenesis of the type II general secretory apparatus. This chain is Prepilin leader peptidase/N-methyltransferase (gspO), found in Escherichia coli (strain K12).